The chain runs to 336 residues: Anthranilate phosphoribosyltransferase (336 aa).

5-phospho-alpha-D-ribose 1-diphosphate is bound by residues G79, 82–83, T87, 89–92, 107–115, and S119; these read GD, NIST, and KHGNRAMSS. Position 79 (G79) interacts with anthranilate. Mg(2+) is bound at residue S91. Residue N110 coordinates anthranilate. An anthranilate-binding site is contributed by R165. 2 residues coordinate Mg(2+): D225 and E226.

The protein belongs to the anthranilate phosphoribosyltransferase family. Homodimer. It depends on Mg(2+) as a cofactor.

It catalyses the reaction N-(5-phospho-beta-D-ribosyl)anthranilate + diphosphate = 5-phospho-alpha-D-ribose 1-diphosphate + anthranilate. Its pathway is amino-acid biosynthesis; L-tryptophan biosynthesis; L-tryptophan from chorismate: step 2/5. Catalyzes the transfer of the phosphoribosyl group of 5-phosphorylribose-1-pyrophosphate (PRPP) to anthranilate to yield N-(5'-phosphoribosyl)-anthranilate (PRA). The protein is Anthranilate phosphoribosyltransferase of Dictyoglomus turgidum (strain DSM 6724 / Z-1310).